The sequence spans 643 residues: Transmembrane protein 62 (643 aa).

Residues 9-29 form a helical membrane-spanning segment; the sequence is VVAGLAAAAVAALLLEHYGLA. N-linked (GlcNAc...) asparagine glycosylation occurs at asparagine 180. The next 4 membrane-spanning stretches (helical) occupy residues 431–451, 484–504, 532–552, and 572–592; these read IVARVLFVLIVLIQLTTLITF, YSVLLLTLYTVLGPWFVGEII, GIIQLVFFNIPLMAYVCWSLL, and IIPVYLLILLLYIWQVYSCYF.

The protein localises to the membrane. This chain is Transmembrane protein 62 (Tmem62), found in Mus musculus (Mouse).